A 92-amino-acid polypeptide reads, in one-letter code: Exodeoxyribonuclease 7 small subunit (92 aa).

Low complexity predominate over residues 71-84 (AESAGTAKSAVAAD). The disordered stretch occupies residues 71-92 (AESAGTAKSAVAADSRGAADSA).

Belongs to the XseB family. In terms of assembly, heterooligomer composed of large and small subunits.

It localises to the cytoplasm. The enzyme catalyses Exonucleolytic cleavage in either 5'- to 3'- or 3'- to 5'-direction to yield nucleoside 5'-phosphates.. Functionally, bidirectionally degrades single-stranded DNA into large acid-insoluble oligonucleotides, which are then degraded further into small acid-soluble oligonucleotides. The sequence is that of Exodeoxyribonuclease 7 small subunit from Leifsonia xyli subsp. xyli (strain CTCB07).